The chain runs to 396 residues: Dihydrolipoyllysine-residue acetyltransferase component of pyruvate dehydrogenase complex (396 aa).

The Lipoyl-binding domain maps to 1–69; sequence MPDIGLEEVE…KTDALIMRCE (69 aa). Lys35 carries the N6-lipoyllysine modification. The 38-residue stretch at 104 to 141 folds into the Peripheral subunit-binding (PSBD) domain; it reads HATPLIRRLARNLNINLYDVVGTGPKNRILKEDLDLYQ. His369 is an active-site residue.

This sequence belongs to the 2-oxoacid dehydrogenase family. In terms of assembly, forms a 24-polypeptide structural core with octahedral symmetry. Requires (R)-lipoate as cofactor.

It carries out the reaction N(6)-[(R)-dihydrolipoyl]-L-lysyl-[protein] + acetyl-CoA = N(6)-[(R)-S(8)-acetyldihydrolipoyl]-L-lysyl-[protein] + CoA. Functionally, the pyruvate dehydrogenase complex catalyzes the overall conversion of pyruvate to acetyl-CoA and CO(2). It contains multiple copies of three enzymatic components: pyruvate dehydrogenase (E1), dihydrolipoamide acetyltransferase (E2) and lipoamide dehydrogenase (E3). The protein is Dihydrolipoyllysine-residue acetyltransferase component of pyruvate dehydrogenase complex (aceF) of Buchnera aphidicola subsp. Acyrthosiphon pisum (strain APS) (Acyrthosiphon pisum symbiotic bacterium).